Here is a 596-residue protein sequence, read N- to C-terminus: Nitrite reductase (596 aa).

Positions 1-29 (MRQRTPFARPGLLASAALALVLGPLAVAA) are cleaved as a signal peptide. The interval 30 to 76 (QEQAAPPKDPAAALEDHKTKTDNRYEPSLDNLAQQDVAALGAPEGIP) is N-terminal tail. Residue His-46 participates in heme c binding. Heme d1 is bound by residues Tyr-54 and Ser-57. Residues 77-162 (ALSDAQYNEA…ANYLLLDPAA (86 aa)) enclose the Cytochrome c domain. Residues Cys-94, Cys-97, His-98, Lys-108, and Tyr-122 each contribute to the heme c site. 10 residues coordinate heme d1: Trp-138, Arg-203, His-229, Arg-232, Arg-245, Arg-272, Tyr-292, Arg-420, Gln-536, and Thr-583. The tract at residues 163–596 (PPEFGMKEMR…NVYNTMTDTY (434 aa)) is D1-heme domain.

In terms of assembly, homodimer. Heme c serves as cofactor. Heme is required as a cofactor.

It localises to the periplasm. It carries out the reaction nitric oxide + Fe(III)-[cytochrome c] + H2O = Fe(II)-[cytochrome c] + nitrite + 2 H(+). The catalysed reaction is A + NH4(+) + H2O = hydroxylamine + AH2 + H(+). Its function is as follows. Inactivation of this cytochrome oxidase results in the loss of nitrite and nitric oxide reductase activities, but not of nitrous oxide reductase activity. The protein is Nitrite reductase (nirS) of Paracoccus denitrificans (strain Pd 1222).